The chain runs to 299 residues: Tyrosine recombinase XerC (299 aa).

Residues 3–87 (PQCQSYLQQF…AIKQWGEFLL (85 aa)) enclose the Core-binding (CB) domain. Positions 108–287 (PLPKNIDVDS…DFQHLAKVYD (180 aa)) constitute a Tyr recombinase domain. Catalysis depends on residues Arg-147, Lys-171, His-239, Arg-242, and His-265. Tyr-274 serves as the catalytic O-(3'-phospho-DNA)-tyrosine intermediate.

Belongs to the 'phage' integrase family. XerC subfamily. As to quaternary structure, forms a cyclic heterotetrameric complex composed of two molecules of XerC and two molecules of XerD.

It localises to the cytoplasm. Site-specific tyrosine recombinase, which acts by catalyzing the cutting and rejoining of the recombining DNA molecules. The XerC-XerD complex is essential to convert dimers of the bacterial chromosome into monomers to permit their segregation at cell division. It also contributes to the segregational stability of plasmids. The polypeptide is Tyrosine recombinase XerC (Shewanella sp. (strain ANA-3)).